Reading from the N-terminus, the 490-residue chain is Betaine aldehyde dehydrogenase (490 aa).

Position 93 (aspartate 93) interacts with K(+). Residue 150-152 participates in NAD(+) binding; that stretch reads GAW. Residue lysine 162 is the Charge relay system of the active site. Position 176-179 (176-179) interacts with NAD(+); the sequence is KPSE. Residue valine 180 coordinates K(+). Residue 230–233 participates in NAD(+) binding; it reads GIAS. Position 246 (leucine 246) interacts with K(+). The Proton acceptor role is filled by glutamate 252. NAD(+) contacts are provided by glycine 254, cysteine 286, and glutamate 387. Cysteine 286 (nucleophile) is an active-site residue. Cysteine 286 bears the Cysteine sulfenic acid (-SOH) mark. Residues lysine 457 and glycine 460 each coordinate K(+). The active-site Charge relay system is the glutamate 464.

Belongs to the aldehyde dehydrogenase family. In terms of assembly, dimer of dimers. The cofactor is K(+).

It catalyses the reaction betaine aldehyde + NAD(+) + H2O = glycine betaine + NADH + 2 H(+). It participates in amine and polyamine biosynthesis; betaine biosynthesis via choline pathway; betaine from betaine aldehyde: step 1/1. In terms of biological role, involved in the biosynthesis of the osmoprotectant glycine betaine. Catalyzes the irreversible oxidation of betaine aldehyde to the corresponding acid. This Yersinia pseudotuberculosis serotype O:1b (strain IP 31758) protein is Betaine aldehyde dehydrogenase.